We begin with the raw amino-acid sequence, 232 residues long: 5'-methylthioadenosine/S-adenosylhomocysteine nucleosidase (232 aa).

Glutamate 12 (proton acceptor) is an active-site residue. Substrate-binding positions include glycine 78, isoleucine 152, and 173–174 (ME). Aspartate 197 functions as the Proton donor in the catalytic mechanism.

The protein belongs to the PNP/UDP phosphorylase family. MtnN subfamily. In terms of assembly, homodimer.

The catalysed reaction is S-adenosyl-L-homocysteine + H2O = S-(5-deoxy-D-ribos-5-yl)-L-homocysteine + adenine. It catalyses the reaction S-methyl-5'-thioadenosine + H2O = 5-(methylsulfanyl)-D-ribose + adenine. It carries out the reaction 5'-deoxyadenosine + H2O = 5-deoxy-D-ribose + adenine. Its pathway is amino-acid biosynthesis; L-methionine biosynthesis via salvage pathway; S-methyl-5-thio-alpha-D-ribose 1-phosphate from S-methyl-5'-thioadenosine (hydrolase route): step 1/2. In terms of biological role, catalyzes the irreversible cleavage of the glycosidic bond in both 5'-methylthioadenosine (MTA) and S-adenosylhomocysteine (SAH/AdoHcy) to adenine and the corresponding thioribose, 5'-methylthioribose and S-ribosylhomocysteine, respectively. Also cleaves 5'-deoxyadenosine, a toxic by-product of radical S-adenosylmethionine (SAM) enzymes, into 5-deoxyribose and adenine. Thus, is required for in vivo function of the radical SAM enzymes biotin synthase and lipoic acid synthase, that are inhibited by 5'-deoxyadenosine accumulation. The protein is 5'-methylthioadenosine/S-adenosylhomocysteine nucleosidase of Shigella boydii serotype 4 (strain Sb227).